A 455-amino-acid polypeptide reads, in one-letter code: Ribosomal protein uS12 methylthiotransferase RimO (455 aa).

The MTTase N-terminal domain occupies 1–114 (MKYHIVTLGC…INALVGQLER (114 aa)). [4Fe-4S] cluster is bound by residues Cys-10, Cys-46, Cys-78, Cys-166, Cys-170, and Cys-173. Residues 152 to 383 (THQTPSAYLK…MRLQQTISYT (232 aa)) form the Radical SAM core domain. Residues 386-455 (QRWVGRTIKV…AYDLWGEALS (70 aa)) form the TRAM domain.

This sequence belongs to the methylthiotransferase family. RimO subfamily. The cofactor is [4Fe-4S] cluster.

The protein resides in the cytoplasm. The enzyme catalyses L-aspartate(89)-[ribosomal protein uS12]-hydrogen + (sulfur carrier)-SH + AH2 + 2 S-adenosyl-L-methionine = 3-methylsulfanyl-L-aspartate(89)-[ribosomal protein uS12]-hydrogen + (sulfur carrier)-H + 5'-deoxyadenosine + L-methionine + A + S-adenosyl-L-homocysteine + 2 H(+). Functionally, catalyzes the methylthiolation of an aspartic acid residue of ribosomal protein uS12. This is Ribosomal protein uS12 methylthiotransferase RimO from Chloroflexus aurantiacus (strain ATCC 29366 / DSM 635 / J-10-fl).